We begin with the raw amino-acid sequence, 181 residues long: Macro domain-containing protein in sno 5'region (181 aa).

Residues 1–172 (MTTITLVQGD…TFARELGDAG (172 aa)) form the Macro domain.

It belongs to the MacroD-type family.

The chain is Macro domain-containing protein in sno 5'region from Streptomyces nogalater.